The primary structure comprises 169 residues: Putative phosphoesterase SACOL1020 (169 aa).

H34 functions as the Proton donor in the catalytic mechanism. Short sequence motifs (HXTX) lie at residues 34 to 37 (HVTI) and 115 to 118 (HFTI). H115 serves as the catalytic Proton acceptor.

Belongs to the 2H phosphoesterase superfamily. YjcG family.

This chain is Putative phosphoesterase SACOL1020, found in Staphylococcus aureus (strain COL).